The chain runs to 297 residues: Putative phosphate permease MJ0630 (297 aa).

A run of 9 helical transmembrane segments spans residues 2–22 (ITIE…LFIL), 45–65 (LLIL…NVGS), 67–87 (VNSL…VMTL), 99–119 (TVII…YVFG), 121–141 (ILLS…ILYS), 154–174 (ITMI…NLGS), 180–200 (VLGT…FLCL), 225–245 (FIAQ…GMPV), and 274–294 (NIIF…FIIN).

Belongs to the inorganic phosphate transporter (PiT) (TC 2.A.20) family.

Its subcellular location is the cell membrane. Functionally, potential transporter for phosphate. This is Putative phosphate permease MJ0630 from Methanocaldococcus jannaschii (strain ATCC 43067 / DSM 2661 / JAL-1 / JCM 10045 / NBRC 100440) (Methanococcus jannaschii).